Consider the following 662-residue polypeptide: UvrABC system protein B (662 aa).

The region spanning 31–188 (DNIEGGEKAQ…NDLVDIQFER (158 aa)) is the Helicase ATP-binding domain. Position 44–51 (44–51 (GATGTGKT)) interacts with ATP. Positions 97–120 (YYDYYQPEAYVPSSDTYIEKDSSV) match the Beta-hairpin motif. The region spanning 435-601 (QIDDLLGEIN…TIKKEIRDLI (167 aa)) is the Helicase C-terminal domain. One can recognise a UVR domain in the interval 626–661 (KELVKKLEKQMQEAVEVLDFELAAQIRDMMLEVKAL).

This sequence belongs to the UvrB family. Forms a heterotetramer with UvrA during the search for lesions. Interacts with UvrC in an incision complex.

It is found in the cytoplasm. Its function is as follows. The UvrABC repair system catalyzes the recognition and processing of DNA lesions. A damage recognition complex composed of 2 UvrA and 2 UvrB subunits scans DNA for abnormalities. Upon binding of the UvrA(2)B(2) complex to a putative damaged site, the DNA wraps around one UvrB monomer. DNA wrap is dependent on ATP binding by UvrB and probably causes local melting of the DNA helix, facilitating insertion of UvrB beta-hairpin between the DNA strands. Then UvrB probes one DNA strand for the presence of a lesion. If a lesion is found the UvrA subunits dissociate and the UvrB-DNA preincision complex is formed. This complex is subsequently bound by UvrC and the second UvrB is released. If no lesion is found, the DNA wraps around the other UvrB subunit that will check the other stand for damage. The chain is UvrABC system protein B from Streptococcus pneumoniae (strain Taiwan19F-14).